We begin with the raw amino-acid sequence, 357 residues long: Popeye domain-containing protein 1 (357 aa).

Residues 1 to 38 lie on the Extracellular side of the membrane; the sequence is MDTTAISPLTPLGVIPDLKNATSVPFNETACENWKEIH. Asparagine 20 and asparagine 27 each carry an N-linked (GlcNAc...) asparagine glycan. A helical transmembrane segment spans residues 39–59; it reads HLVFHVANICFAAGLVIPTTL. Residues 60 to 62 lie on the Cytoplasmic side of the membrane; that stretch reads NLH. The chain crosses the membrane as a helical span at residues 63-83; that stretch reads MIFLRGLLTVGCALFIIWATL. The Extracellular portion of the chain corresponds to 84–89; the sequence is YRCALD. The chain crosses the membrane as a helical span at residues 90–110; it reads IMIWNSVFLVVNLLHFIYLVY. Residues 111 to 357 are Cytoplasmic-facing; it reads KRRPIKIEKE…AEKLELQRLP (247 aa). The segment covering 309–323 has biased composition (low complexity); sequence GTSSSSSLRPGRTSP. The segment at 309–357 is disordered; that stretch reads GTSSSSSLRPGRTSPYLRTSAKMKPIEESVEDDVFEAPSAEKLELQRLP. Residues 347–357 show a composition bias toward basic and acidic residues; sequence SAEKLELQRLP.

This sequence belongs to the popeye family. Homodimer. Homodimerization requires the C-terminus cytoplasmic region. Expressed in the heart and skeletal muscle (at protein level). Isoform 1 and isoform 4: expressed in heart, muscle, brain, stomach, kidney, lung and spleen.

The protein resides in the lateral cell membrane. It localises to the cell junction. It is found in the tight junction. The protein localises to the membrane. Its subcellular location is the cell membrane. The protein resides in the sarcolemma. It localises to the caveola. In terms of biological role, cell adhesion molecule involved in the establishment and/or maintenance of cell integrity. Involved in the formation and regulation of the tight junction (TJ) paracellular permeability barrier in epithelial cells. Induces primordial adhesive contact and aggregation of epithelial cells in a Ca(2+)-independent manner. Involved in epithelial movement during corneal sheet formation and regeneration. May play a role in VAMP3-mediated vesicular transport and recycling of receptor molecules. May play a role in the regulation of cell shape and movement by modulating the Rho-GTPase activity. May be involved in skeletal muscle and heart development as well as in the maintenance of heart function. May also be involved in striated muscle regeneration and in the regulation of cell spreading. This is Popeye domain-containing protein 1 (POPDC1) from Gallus gallus (Chicken).